The primary structure comprises 225 residues: 3-demethoxyubiquinol 3-hydroxylase (225 aa).

Polar residues predominate over residues 1–11 (MSVASTSSGFT). Positions 1–20 (MSVASTSSGFTPFSRRRGPL) are disordered. Residues E74, E104, H107, E156, E188, and H191 each contribute to the Fe cation site. A disordered region spans residues 181 to 203 (VSQMKDDEAQHRASAERAGGVPL). The segment covering 184-195 (MKDDEAQHRASA) has biased composition (basic and acidic residues).

Belongs to the COQ7 family. Fe cation is required as a cofactor.

The protein localises to the cell membrane. It carries out the reaction a 5-methoxy-2-methyl-3-(all-trans-polyprenyl)benzene-1,4-diol + AH2 + O2 = a 3-demethylubiquinol + A + H2O. It participates in cofactor biosynthesis; ubiquinone biosynthesis. Functionally, catalyzes the hydroxylation of 2-nonaprenyl-3-methyl-6-methoxy-1,4-benzoquinol during ubiquinone biosynthesis. In Bordetella petrii (strain ATCC BAA-461 / DSM 12804 / CCUG 43448), this protein is 3-demethoxyubiquinol 3-hydroxylase.